Consider the following 382-residue polypeptide: Beta-lactamase CMY-1 (382 aa).

Residues 1–23 (MQQRQSILWGAVATLMWAGLAHA) form the signal peptide. Ser88 serves as the catalytic Acyl-ester intermediate. Residues Ser88, Gln144, Tyr174, Asn176, and Asn363 each coordinate a beta-lactam.

This sequence belongs to the class-C beta-lactamase family.

The enzyme catalyses a beta-lactam + H2O = a substituted beta-amino acid. Its activity is regulated as follows. Inhibited by the beta-lactamase-blocking agent sulbactam. Its function is as follows. Class C beta-lactamase which confers resistance to penicillins and cephalosporins. Has benzylpenicillin- and cefalotin-hydrolyzing activities. Has weak cefuroxime, cefotaxime, cefoxitin, imipenem and oxacillin-hydrolyzing activities. The protein is Beta-lactamase CMY-1 of Klebsiella pneumoniae.